A 366-amino-acid polypeptide reads, in one-letter code: Peptide chain release factor 2 (366 aa).

The residue at position 251 (Q251) is an N5-methylglutamine.

This sequence belongs to the prokaryotic/mitochondrial release factor family. In terms of processing, methylated by PrmC. Methylation increases the termination efficiency of RF2.

It localises to the cytoplasm. Peptide chain release factor 2 directs the termination of translation in response to the peptide chain termination codons UGA and UAA. In Listeria monocytogenes serotype 4b (strain F2365), this protein is Peptide chain release factor 2 (prfB).